Consider the following 462-residue polypeptide: Trigger factor (462 aa).

The region spanning 163 to 248 (GDEVLFDFKG…LKEVRRVNSL (86 aa)) is the PPIase FKBP-type domain. Residues 442 to 462 (SMQEKQTQEPAEEKVETKEEK) are disordered. The segment covering 452-462 (AEEKVETKEEK) has biased composition (basic and acidic residues).

It belongs to the FKBP-type PPIase family. Tig subfamily.

Its subcellular location is the cytoplasm. It catalyses the reaction [protein]-peptidylproline (omega=180) = [protein]-peptidylproline (omega=0). Involved in protein export. Acts as a chaperone by maintaining the newly synthesized protein in an open conformation. Functions as a peptidyl-prolyl cis-trans isomerase. The chain is Trigger factor from Mycoplasmopsis synoviae (strain 53) (Mycoplasma synoviae).